The sequence spans 348 residues: NADH-quinone oxidoreductase subunit H (348 aa).

A run of 8 helical transmembrane segments spans residues 25 to 45, 95 to 115, 128 to 148, 168 to 188, 204 to 224, 254 to 274, 287 to 307, and 327 to 347; these read ILFLVGQALVIFLVVVIVAAL, FMFILAPAVAMFTALASFAII, IGILFFFAMAGMAVYAVMFGG, ISYEVFLGLSLMGVVAMTGSF, WNIFPQFLGFLTFVVAGVAVT, FFIGEYVNVVLISALMTCLFF, ILPPAFWFMIKTLFFMTMFVL, and VCLPVTLINLMITAALILISA.

Belongs to the complex I subunit 1 family. NDH-1 is composed of 14 different subunits. Subunits NuoA, H, J, K, L, M, N constitute the membrane sector of the complex.

Its subcellular location is the cell inner membrane. The catalysed reaction is a quinone + NADH + 5 H(+)(in) = a quinol + NAD(+) + 4 H(+)(out). Its function is as follows. NDH-1 shuttles electrons from NADH, via FMN and iron-sulfur (Fe-S) centers, to quinones in the respiratory chain. The immediate electron acceptor for the enzyme in this species is believed to be ubiquinone. Couples the redox reaction to proton translocation (for every two electrons transferred, four hydrogen ions are translocated across the cytoplasmic membrane), and thus conserves the redox energy in a proton gradient. This subunit may bind ubiquinone. The chain is NADH-quinone oxidoreductase subunit H from Psychrobacter sp. (strain PRwf-1).